A 346-amino-acid chain; its full sequence is Histidinol-phosphate aminotransferase (346 aa).

Lys-209 is modified (N6-(pyridoxal phosphate)lysine).

The protein belongs to the class-II pyridoxal-phosphate-dependent aminotransferase family. Histidinol-phosphate aminotransferase subfamily. Homodimer. It depends on pyridoxal 5'-phosphate as a cofactor.

It catalyses the reaction L-histidinol phosphate + 2-oxoglutarate = 3-(imidazol-4-yl)-2-oxopropyl phosphate + L-glutamate. The protein operates within amino-acid biosynthesis; L-histidine biosynthesis; L-histidine from 5-phospho-alpha-D-ribose 1-diphosphate: step 7/9. The protein is Histidinol-phosphate aminotransferase of Vibrio parahaemolyticus serotype O3:K6 (strain RIMD 2210633).